Reading from the N-terminus, the 116-residue chain is Mercuric transport protein MerT (116 aa).

2 helical membrane passes run 16–36 (LAAI…ALGF) and 46–66 (VLEP…FFAW). Hg(2+) is bound by residues C24 and C25. Residues C76 and C82 each coordinate Hg(2+). Residues 94–114 (IFWFVAVLVLVALGFPYVMPF) form a helical membrane-spanning segment.

Belongs to the MerT family.

The protein resides in the cell inner membrane. In terms of biological role, involved in mercury resistance. Probably transfers a mercuric ion from the periplasmic Hg(2+)-binding protein MerP to the cytoplasmic mercuric reductase MerA. The chain is Mercuric transport protein MerT from Acinetobacter calcoaceticus.